The primary structure comprises 545 residues: Chaperonin GroEL (545 aa).

Residues 30 to 33 (TLGP), Lys51, 87 to 91 (DGTTT), Gly415, 479 to 481 (NAA), and Asp495 each bind ATP. The disordered stretch occupies residues 526–545 (KDDAPAPAMPDMGGMGGMGM).

The protein belongs to the chaperonin (HSP60) family. Forms a cylinder of 14 subunits composed of two heptameric rings stacked back-to-back. Interacts with the co-chaperonin GroES.

The protein resides in the cytoplasm. The enzyme catalyses ATP + H2O + a folded polypeptide = ADP + phosphate + an unfolded polypeptide.. Its function is as follows. Together with its co-chaperonin GroES, plays an essential role in assisting protein folding. The GroEL-GroES system forms a nano-cage that allows encapsulation of the non-native substrate proteins and provides a physical environment optimized to promote and accelerate protein folding. This is Chaperonin GroEL from Paracidovorax citrulli (strain AAC00-1) (Acidovorax citrulli).